Consider the following 290-residue polypeptide: Xyloglucan endotransglycosylase/hydrolase protein 8 (290 aa).

Residues 1–25 form the signal peptide; sequence MAKHLALSVAAAVAVSWLAASSAAA. The region spanning 26–218 is the GH16 domain; the sequence is AGFYEKFDVV…WSGAPFVVSY (193 aa). Glu106 (nucleophile) is an active-site residue. The active-site Proton donor is the Glu110. A xyloglucan-binding site is contributed by Glu110. Asn114 carries N-linked (GlcNAc...) asparagine glycosylation. Xyloglucan contacts are provided by residues 123-125, 133-135, and 197-198; these read NTN, KKE, and YW. 2 disulfide bridges follow: Cys226–Cys240 and Cys273–Cys287. Arg278 contacts xyloglucan.

This sequence belongs to the glycosyl hydrolase 16 family. XTH group 2 subfamily. Post-translationally, contains at least one intrachain disulfide bond essential for its enzymatic activity. In terms of tissue distribution, transcript strongly detected in leaf sheaths. Weakly or not expressed in leaf blades, roots and calli. Accumulation of transcript detected in shoot apex meristem, vascular tissues, young leaves, vascular bundles of leaf sheaths, and peripheral cylinder of the vascular bundles and fibers in the nodal region.

The protein localises to the secreted. The protein resides in the cell wall. It is found in the extracellular space. Its subcellular location is the apoplast. It carries out the reaction breaks a beta-(1-&gt;4) bond in the backbone of a xyloglucan and transfers the xyloglucanyl segment on to O-4 of the non-reducing terminal glucose residue of an acceptor, which can be a xyloglucan or an oligosaccharide of xyloglucan.. Functionally, catalyzes xyloglucan endohydrolysis (XEH) and/or endotransglycosylation (XET). Cleaves and religates xyloglucan polymers, an essential constituent of the primary cell wall, and thereby participates in cell wall construction of growing tissues. May promote elongation of three internodes (II, III and IV) and may be involved in cell elongation processes. In Oryza sativa subsp. japonica (Rice), this protein is Xyloglucan endotransglycosylase/hydrolase protein 8 (XTH8).